A 176-amino-acid chain; its full sequence is bZIP transcription factor 8 (176 aa).

A disordered region spans residues 44-101; the sequence is PNTSGGSDESMSDGSKIDPKRSPKYLEKRMKNNEAAKKSRASRKHREQKNQTENELLK. Residues 47–57 are compositionally biased toward low complexity; sequence SGGSDESMSDG. The segment covering 58 to 80 has biased composition (basic and acidic residues); that stretch reads SKIDPKRSPKYLEKRMKNNEAAK. One can recognise a bZIP domain in the interval 65 to 128; that stretch reads SPKYLEKRMK…AQMQITIRDM (64 aa). A basic motif region spans residues 67–92; the sequence is KYLEKRMKNNEAAKKSRASRKHREQK. The span at 81–90 shows a compositional bias: basic residues; that stretch reads KSRASRKHRE. Residues 91–101 are compositionally biased toward basic and acidic residues; the sequence is QKNQTENELLK. Positions 100–107 are leucine-zipper; sequence LKRKNAAL.

This sequence belongs to the bZIP family.

The sequence is that of bZIP transcription factor 8 (zip-8) from Caenorhabditis elegans.